A 332-amino-acid polypeptide reads, in one-letter code: Thiamine-binding periplasmic protein (332 aa).

Residues Met1 to Ala20 form the signal peptide. Thiamine-binding positions include Trp202 and Tyr220–Ser223.

The protein belongs to the bacterial solute-binding protein 1 family. As to quaternary structure, the complex is composed of two ATP-binding proteins (ThiQ), two transmembrane proteins (ThiP) and a solute-binding protein (ThiB).

It is found in the periplasm. Its function is as follows. Part of the ABC transporter complex ThiBPQ involved in thiamine import. The chain is Thiamine-binding periplasmic protein (thiB) from Haemophilus influenzae (strain ATCC 51907 / DSM 11121 / KW20 / Rd).